The sequence spans 473 residues: Bactericidal permeability-increasing protein (473 aa).

The N-terminal stretch at 1 to 18 (MVLCCWLALVALIPMTLS) is a signal peptide. A central sheet, part 1 region spans residues 19–29 (INPGVKVRLTG). Positions 28 to 209 (TGKGLEYGRQ…SDLNPQLKTL (182 aa)) are N-terminal barrel. Cys-153 and Cys-192 are oxidised to a cystine. The segment at 211–275 (VLAKVDQYAE…INNMLYISVS (65 aa)) is central sheet, part 2. Positions 225–230 (MVSSPT) are cleavage sites for elastase. The C-terminal barrel stretch occupies residues 276 to 446 (AFTINSAAFV…LAKGYPLPTL (171 aa)). A glycan (N-linked (GlcNAc...) asparagine) is linked at Asn-365. Positions 453–472 (NTELQVLKDYMLIGTDVQFT) are central sheet, part 3.

This sequence belongs to the BPI/LBP/Plunc superfamily. BPI/LBP family. In terms of assembly, monomer. Homodimer; disulfide-linked. Expressed in spleen. Lower expression in gill, head kidney, entire kidney, skin, intestine and blood and lowest expression in liver and muscle.

The protein localises to the secreted. Its function is as follows. The cytotoxic action of BPI is limited to many species of Gram-negative bacteria; this specificity may be explained by a strong affinity of the very basic N-terminal half for the negatively charged lipopolysaccharides that are unique to the Gram-negative bacterial outer envelope. Exhibits neutralizing capacity towards P.aeruginosa lipopolysaccharides (LPS) and has bactericidal activity against multiple drug resistant (MDR) P.aeruginosa strains derived from people with cystic fibrosis. Has antibacterial activity against E.coli, but not against S.iniae. This chain is Bactericidal permeability-increasing protein, found in Sebastes schlegelii (Korean rockfish).